Reading from the N-terminus, the 193-residue chain is Ion-translocating oxidoreductase complex subunit A (193 aa).

6 helical membrane passes run 5–25 (LLLLVGTVLINNFVLVKFLGL), 39–59 (IGMGLATTFVMTLASACSYLM), 63–83 (ILIPLNIAYLRTLAFILVIAV), 102–122 (LLGIFLPLITTNCAVLGVALL), 134–154 (IIYGFGAATGFSLVLILFAAM), and 171–191 (SIAMITAGLMSLAFMGFTGLI).

The protein belongs to the NqrDE/RnfAE family. The complex is composed of six subunits: RnfA, RnfB, RnfC, RnfD, RnfE and RnfG.

It localises to the cell inner membrane. Its function is as follows. Part of a membrane-bound complex that couples electron transfer with translocation of ions across the membrane. This chain is Ion-translocating oxidoreductase complex subunit A, found in Aeromonas hydrophila subsp. hydrophila (strain ATCC 7966 / DSM 30187 / BCRC 13018 / CCUG 14551 / JCM 1027 / KCTC 2358 / NCIMB 9240 / NCTC 8049).